We begin with the raw amino-acid sequence, 235 residues long: Large ribosomal subunit protein uL3 (235 aa).

Gln-151 is subject to N5-methylglutamine.

It belongs to the universal ribosomal protein uL3 family. In terms of assembly, part of the 50S ribosomal subunit. Forms a cluster with proteins L14 and L19. In terms of processing, methylated by PrmB.

One of the primary rRNA binding proteins, it binds directly near the 3'-end of the 23S rRNA, where it nucleates assembly of the 50S subunit. The protein is Large ribosomal subunit protein uL3 of Rhodospirillum rubrum (strain ATCC 11170 / ATH 1.1.1 / DSM 467 / LMG 4362 / NCIMB 8255 / S1).